The following is a 181-amino-acid chain: ATP-dependent protease subunit HslV (181 aa).

The active site involves threonine 5. Na(+) is bound by residues serine 162, cysteine 165, and threonine 168.

The protein belongs to the peptidase T1B family. HslV subfamily. In terms of assembly, a double ring-shaped homohexamer of HslV is capped on each side by a ring-shaped HslU homohexamer. The assembly of the HslU/HslV complex is dependent on binding of ATP.

Its subcellular location is the cytoplasm. The catalysed reaction is ATP-dependent cleavage of peptide bonds with broad specificity.. With respect to regulation, allosterically activated by HslU binding. Protease subunit of a proteasome-like degradation complex believed to be a general protein degrading machinery. The polypeptide is ATP-dependent protease subunit HslV (Campylobacter hominis (strain ATCC BAA-381 / DSM 21671 / CCUG 45161 / LMG 19568 / NCTC 13146 / CH001A)).